The sequence spans 464 residues: Soluble pyridine nucleotide transhydrogenase (464 aa).

Position 35-44 (35-44 (DSRRQVGGNC)) interacts with FAD.

This sequence belongs to the class-I pyridine nucleotide-disulfide oxidoreductase family. It depends on FAD as a cofactor.

It is found in the cytoplasm. The catalysed reaction is NAD(+) + NADPH = NADH + NADP(+). In terms of biological role, conversion of NADPH, generated by peripheral catabolic pathways, to NADH, which can enter the respiratory chain for energy generation. In Pseudomonas fluorescens (strain Pf0-1), this protein is Soluble pyridine nucleotide transhydrogenase.